A 430-amino-acid polypeptide reads, in one-letter code: Asparagine--tRNA ligase (430 aa).

This sequence belongs to the class-II aminoacyl-tRNA synthetase family. As to quaternary structure, homodimer.

It is found in the cytoplasm. It carries out the reaction tRNA(Asn) + L-asparagine + ATP = L-asparaginyl-tRNA(Asn) + AMP + diphosphate + H(+). The protein is Asparagine--tRNA ligase of Staphylococcus aureus (strain MRSA252).